A 173-amino-acid polypeptide reads, in one-letter code: ATP synthase subunit b (173 aa).

A helical transmembrane segment spans residues Gly15–Leu35.

Belongs to the ATPase B chain family. F-type ATPases have 2 components, F(1) - the catalytic core - and F(0) - the membrane proton channel. F(1) has five subunits: alpha(3), beta(3), gamma(1), delta(1), epsilon(1). F(0) has three main subunits: a(1), b(2) and c(10-14). The alpha and beta chains form an alternating ring which encloses part of the gamma chain. F(1) is attached to F(0) by a central stalk formed by the gamma and epsilon chains, while a peripheral stalk is formed by the delta and b chains.

Its subcellular location is the cell membrane. Functionally, f(1)F(0) ATP synthase produces ATP from ADP in the presence of a proton or sodium gradient. F-type ATPases consist of two structural domains, F(1) containing the extramembraneous catalytic core and F(0) containing the membrane proton channel, linked together by a central stalk and a peripheral stalk. During catalysis, ATP synthesis in the catalytic domain of F(1) is coupled via a rotary mechanism of the central stalk subunits to proton translocation. In terms of biological role, component of the F(0) channel, it forms part of the peripheral stalk, linking F(1) to F(0). The polypeptide is ATP synthase subunit b (Staphylococcus aureus (strain MRSA252)).